Reading from the N-terminus, the 612-residue chain is Peroxisomal carnitine O-octanoyltransferase (612 aa).

Met-1 bears the N-acetylmethionine mark. Residues Lys-40 and Lys-57 each carry the N6-succinyllysine modification. His-327 functions as the Proton acceptor in the catalytic mechanism. CoA-binding positions include Lys-406 and 410–417; that span reads KNKMLHPD. At Lys-406 the chain carries N6-acetyllysine; alternate. Lys-406 is subject to N6-succinyllysine; alternate. (R)-carnitine-binding residues include Tyr-439, Thr-441, and Thr-452. Positions 610–612 match the Microbody targeting signal motif; it reads THL.

The protein belongs to the carnitine/choline acetyltransferase family. As to quaternary structure, monomer.

It is found in the peroxisome. It carries out the reaction octanoyl-CoA + (R)-carnitine = O-octanoyl-(R)-carnitine + CoA. The catalysed reaction is 4,8-dimethylnonanoyl-CoA + (R)-carnitine = O-4,8-dimethylnonanoyl-(R)-carnitine + CoA. Its pathway is lipid metabolism; fatty acid beta-oxidation. Functionally, beta-oxidation of fatty acids. The highest activity concerns the C6 to C10 chain length substrate. Converts the end product of pristanic acid beta oxidation, 4,8-dimethylnonanoyl-CoA, to its corresponding carnitine ester. This Homo sapiens (Human) protein is Peroxisomal carnitine O-octanoyltransferase (CROT).